A 169-amino-acid polypeptide reads, in one-letter code: Protein-export protein SecB (169 aa).

It belongs to the SecB family. Homotetramer, a dimer of dimers. One homotetramer interacts with 1 SecA dimer.

It localises to the cytoplasm. Its function is as follows. One of the proteins required for the normal export of preproteins out of the cell cytoplasm. It is a molecular chaperone that binds to a subset of precursor proteins, maintaining them in a translocation-competent state. It also specifically binds to its receptor SecA. The sequence is that of Protein-export protein SecB from Alteromonas mediterranea (strain DSM 17117 / CIP 110805 / LMG 28347 / Deep ecotype).